The primary structure comprises 676 residues: F420-dependent formate dehydrogenase 2 subunit alpha (676 aa).

In terms of domain architecture, 4Fe-4S Mo/W bis-MGD-type spans 4–60; that stretch reads FKVVHTICPYCGTGCGIDLVVKDGKVVDSHPFKRHPVNEGKVCIKGNYCYEFVHSED. Residues Cys-11, Cys-14, Cys-18, and Cys-46 each contribute to the [4Fe-4S] cluster site. Position 133 (Sec-133) is a non-standard amino acid, selenocysteine.

Belongs to the prokaryotic molybdopterin-containing oxidoreductase family. As to quaternary structure, dimer of an alpha (FdhA2) and a beta (FdhB2) subunit. Requires [4Fe-4S] cluster as cofactor. Mo-bis(molybdopterin guanine dinucleotide) is required as a cofactor. It depends on Zn(2+) as a cofactor.

The catalysed reaction is oxidized coenzyme F420-(gamma-L-Glu)(n) + formate + 2 H(+) = reduced coenzyme F420-(gamma-L-Glu)(n) + CO2. Functionally, catalyzes the oxidation of formate to carbon dioxide, with coenzyme F420 as the electron acceptor. In vitro can also use methyl viologen as electron acceptor. The protein is F420-dependent formate dehydrogenase 2 subunit alpha of Methanococcus maripaludis (strain DSM 14266 / JCM 13030 / NBRC 101832 / S2 / LL).